We begin with the raw amino-acid sequence, 264 residues long: Tryptophan synthase alpha chain (264 aa).

Residues glutamate 49 and aspartate 60 each act as proton acceptor in the active site.

The protein belongs to the TrpA family. In terms of assembly, tetramer of two alpha and two beta chains.

It catalyses the reaction (1S,2R)-1-C-(indol-3-yl)glycerol 3-phosphate + L-serine = D-glyceraldehyde 3-phosphate + L-tryptophan + H2O. The protein operates within amino-acid biosynthesis; L-tryptophan biosynthesis; L-tryptophan from chorismate: step 5/5. Functionally, the alpha subunit is responsible for the aldol cleavage of indoleglycerol phosphate to indole and glyceraldehyde 3-phosphate. In Picosynechococcus sp. (strain ATCC 27264 / PCC 7002 / PR-6) (Agmenellum quadruplicatum), this protein is Tryptophan synthase alpha chain.